The primary structure comprises 231 residues: MYFPIEKPDVWGIFKKRLNRFVGLAEIDGVETLVHIHDPGRLQELLFPGAMIWARRKQRGKTQYYLTAVELDDELVLIDPAAHNKVTSWLIEAGFLLRGYAIERYEPAFGKGRFDLLLRGPNGQRALVEVKGVTLEAGGRALFPDAPTSRGARHMEELAKAVTEGFEAHVIFLVFRKRAKVFSPNWEMDRKFAEALVRAYRSGVYIHAVKLEMFKWGLRYIEELPIDLLAL.

This sequence belongs to the SfsA family.

This is Sugar fermentation stimulation protein homolog from Pyrobaculum islandicum (strain DSM 4184 / JCM 9189 / GEO3).